We begin with the raw amino-acid sequence, 369 residues long: UDP-N-acetylglucosamine--N-acetylmuramyl-(pentapeptide) pyrophosphoryl-undecaprenol N-acetylglucosamine transferase (369 aa).

UDP-N-acetyl-alpha-D-glucosamine contacts are provided by residues 16-18, Asn130, Arg171, Ser203, Ile253, and Gln298; that span reads TGG.

It belongs to the glycosyltransferase 28 family. MurG subfamily.

It is found in the cell inner membrane. The catalysed reaction is di-trans,octa-cis-undecaprenyl diphospho-N-acetyl-alpha-D-muramoyl-L-alanyl-D-glutamyl-meso-2,6-diaminopimeloyl-D-alanyl-D-alanine + UDP-N-acetyl-alpha-D-glucosamine = di-trans,octa-cis-undecaprenyl diphospho-[N-acetyl-alpha-D-glucosaminyl-(1-&gt;4)]-N-acetyl-alpha-D-muramoyl-L-alanyl-D-glutamyl-meso-2,6-diaminopimeloyl-D-alanyl-D-alanine + UDP + H(+). It functions in the pathway cell wall biogenesis; peptidoglycan biosynthesis. Functionally, cell wall formation. Catalyzes the transfer of a GlcNAc subunit on undecaprenyl-pyrophosphoryl-MurNAc-pentapeptide (lipid intermediate I) to form undecaprenyl-pyrophosphoryl-MurNAc-(pentapeptide)GlcNAc (lipid intermediate II). In Cytophaga hutchinsonii (strain ATCC 33406 / DSM 1761 / CIP 103989 / NBRC 15051 / NCIMB 9469 / D465), this protein is UDP-N-acetylglucosamine--N-acetylmuramyl-(pentapeptide) pyrophosphoryl-undecaprenol N-acetylglucosamine transferase.